The chain runs to 326 residues: MQTNLLKPKIISVEALTANQAKVVMEPFERGYGHTLGNALRRVLLSSMVGYAPTEVAIAGVVHEYSTLDGVQEDVVNLLLNLKGIVFKLQSRDEVTINLRKEGPGVVTAKDIDLPHDVEIMNPDHVIAHLSAGGKLDMQIKVEKGRGYVPGNVRQYNDETTKIIGRIVLDASFSPVSRVSYAVESARVEQRTDLDRLVMTIETNGVLSPEEAIRQAASILVDQLVVFAALESSEVSGDLAPSRSSMVDPMLMRPVDDLELTVRSANCLKAENIYYIGDLIQRTENELLKTPNLGRKSLNEIKDVLAARGLSLGMKLESWPPANLEK.

Positions 1–231 (MQTNLLKPKI…DQLVVFAALE (231 aa)) are alpha N-terminal domain (alpha-NTD). Residues 247-326 (VDPMLMRPVD…ESWPPANLEK (80 aa)) are alpha C-terminal domain (alpha-CTD).

Belongs to the RNA polymerase alpha chain family. As to quaternary structure, homodimer. The RNAP catalytic core consists of 2 alpha, 1 beta, 1 beta' and 1 omega subunit. When a sigma factor is associated with the core the holoenzyme is formed, which can initiate transcription.

The catalysed reaction is RNA(n) + a ribonucleoside 5'-triphosphate = RNA(n+1) + diphosphate. Functionally, DNA-dependent RNA polymerase catalyzes the transcription of DNA into RNA using the four ribonucleoside triphosphates as substrates. This is DNA-directed RNA polymerase subunit alpha from Polynucleobacter asymbioticus (strain DSM 18221 / CIP 109841 / QLW-P1DMWA-1) (Polynucleobacter necessarius subsp. asymbioticus).